We begin with the raw amino-acid sequence, 115 residues long: U31-theraphotoxin-Cg1a (115 aa).

The N-terminal stretch at 1 to 18 (MKLCVIIIASLMVASVSG) is a signal peptide. Residues 19-51 (RLRKIKGTELDKKMLLEKLGHGMDIRFEETPRA) constitute a propeptide that is removed on maturation. 4 disulfides stabilise this stretch: Cys-52–Cys-67, Cys-60–Cys-73, Cys-64–Cys-113, and Cys-66–Cys-86.

This sequence belongs to the neurotoxin 03 (Tx2) family. 02 subfamily. Expressed by the venom gland.

It localises to the secreted. Functionally, probable ion channel inhibitor. This chain is U31-theraphotoxin-Cg1a, found in Chilobrachys guangxiensis (Chinese earth tiger tarantula).